A 625-amino-acid polypeptide reads, in one-letter code: Vitamin B12 transporter BtuB (625 aa).

An N-terminal signal peptide occupies residues 1 to 21 (MTIKKYTLLTALSVTAFSGWA). A TonB box motif is present at residues 31–38 (DEMVVTAN). The 115-residue stretch at 43–157 (PKSSVLAPVD…IGGVINILTG (115 aa)) folds into the TBDR plug domain. Cyanocob(III)alamin contacts are provided by residues Ser90, Asn97, and 115–116 (IT). The region spanning 160–625 (KPGTTLSAGL…EYYFTGSYNF (466 aa)) is the TBDR beta-barrel domain. Beta stranded transmembrane passes span 163–170 (TTLSAGLG), 174–183 (YQTYDGSTQQ), and 189–200 (TTVTLAGNYTYS). Ca(2+) contacts are provided by Asp204, Gln217, Asp219, and Asp221. 2 beta stranded membrane passes run 223-233 (FMGKMLWAGLE) and 238-254 (EQFN…NRSD). 3 residues coordinate Ca(2+): Tyr255, Asp256, and Asp269. 14 beta stranded membrane passes run 271 to 285 (RKLS…LRYK), 287 to 304 (GIYA…KDYN), 317 to 333 (SLDE…NTFQ), 336 to 345 (NGMISAGADW), 363 to 379 (FTQH…QQIS), 381 to 391 (VTLEGAVRSDD), 395 to 410 (FGWH…WEFI), 413 to 427 (YRLI…KAPN), 445 to 454 (ESKQWEGGVE), 460 to 469 (LTWRLSAYRN), 484 to 501 (YFNI…TGSF), 505 to 520 (PLSH…PRNA), 528 to 540 (RRAK…QLDW), and 546 to 561 (DWSV…YDKD). Position 317 (Ser317) interacts with cyanocob(III)alamin. A cyanocob(III)alamin-binding site is contributed by Arg528. Tyr562 serves as a coordination point for cyanocob(III)alamin. 3 beta stranded membrane-spanning segments follow: residues 569-583 (TVEL…LAVS), 596-607 (IANLFDKDYEMV), and 613-625 (PGRE…SYNF). Residues 608–625 (YGYQTPGREYYFTGSYNF) carry the TonB C-terminal box motif.

Belongs to the TonB-dependent receptor family. BtuB (TC 1.B.14.3.1) subfamily.

It is found in the cell outer membrane. Its function is as follows. Involved in the active translocation of vitamin B12 (cyanocobalamin) across the outer membrane to the periplasmic space. It derives its energy for transport by interacting with the trans-periplasmic membrane protein TonB. The chain is Vitamin B12 transporter BtuB from Yersinia pestis bv. Antiqua (strain Antiqua).